The chain runs to 543 residues: Zinc finger protein 852 (543 aa).

Residues 8-82 enclose the KRAB domain; the sequence is VAYEDLSEDY…TSGGLFGVVP (75 aa). S145 carries the phosphoserine modification. C2H2-type zinc fingers lie at residues 159-181, 187-209, 215-237, 243-265, 271-293, 299-321, 327-349, 355-377, 383-405, 411-433, 439-461, and 467-489; these read YRCDECGKAFYWSSHLIGHRRIH, YECNECGKTFRQTSQLIVHLRTH, YECSECGKAYRHSSHLIQHQRLH, YKCNECAKAFNQSSKLFDHQRTH, YECKECGAAFSRSKNLVRHQFLH, YKCNECGRAFCSNRNLIDHQRTH, YKCNECGKAFSRSKCLIRHQSLH, YKCSECGKAFNQISQLVEHERIH, FKCSECGKAFGLSKCLIRHQRLH, YKCNECGKSFNQNSYLIIHQRIH, YECNECGKVFSYNSSLMVHQRTH, and YKCNSCGKAFSDSSQLTVHQRVH.

This sequence belongs to the krueppel C2H2-type zinc-finger protein family.

It localises to the nucleus. May be involved in transcriptional regulation. The polypeptide is Zinc finger protein 852 (ZNF852) (Homo sapiens (Human)).